The sequence spans 94 residues: MIKSELVQIIASRNPHLFQRDVVNIVGAVFDEITNALAEGNRVELRGFGAFSVKNRPARSGRNPRTGETVDVEEKWVPFFKTGKKLRDRLNGAV.

The protein belongs to the bacterial histone-like protein family. In terms of assembly, heterodimer of an alpha and a beta chain.

In terms of biological role, this protein is one of the two subunits of integration host factor, a specific DNA-binding protein that functions in genetic recombination as well as in transcriptional and translational control. This chain is Integration host factor subunit beta, found in Brucella melitensis biotype 2 (strain ATCC 23457).